We begin with the raw amino-acid sequence, 130 residues long: Small ribosomal subunit protein uS11c (130 aa).

It belongs to the universal ribosomal protein uS11 family. As to quaternary structure, part of the 30S ribosomal subunit.

The protein resides in the plastid. Its subcellular location is the chloroplast. The sequence is that of Small ribosomal subunit protein uS11c from Chaetosphaeridium globosum (Charophycean green alga).